The sequence spans 480 residues: Iroquois-class homeodomain protein IRX-1 (480 aa).

Residues 127 to 189 (DPGRPKNATR…NARRRLKKEN (63 aa)) constitute a DNA-binding region (homeobox; TALE-type). Disordered stretches follow at residues 190-285 (KVTW…LGLV), 318-354 (SLAE…PLQH), and 401-480 (PHGP…LPSA). Residues 210 to 232 (TEGDPEKAEDDEEIDLESIDIDQ) are compositionally biased toward acidic residues. S241 is subject to Phosphoserine. Over residues 254 to 263 (ARVAPPASAR) the composition is skewed to low complexity. Positions 264 to 280 (DQSSPLSAAETLKSQDS) are enriched in polar residues. Over residues 339–351 (SHASAHGPPSGSP) the composition is skewed to low complexity.

This sequence belongs to the TALE/IRO homeobox family. In terms of tissue distribution, expressed in specific and overlapping patterns with Irx1 and Irx2 in the developing and adult metanephric kidney. In the adult metanephros, renal expression is found in the loop of Henle in the S3 proximal tubule segment and in the thick ascending limb (TAL) of the distal tubule.

The protein localises to the nucleus. In Mus musculus (Mouse), this protein is Iroquois-class homeodomain protein IRX-1 (Irx1).